Here is a 99-residue protein sequence, read N- to C-terminus: Small ribosomal subunit protein bS20 (99 aa).

This sequence belongs to the bacterial ribosomal protein bS20 family.

In terms of biological role, binds directly to 16S ribosomal RNA. This Cyanothece sp. (strain PCC 7425 / ATCC 29141) protein is Small ribosomal subunit protein bS20.